A 417-amino-acid chain; its full sequence is Peptidyl-Asp metalloendopeptidase (417 aa).

A signal peptide spans 1–25; the sequence is MLSRSIGKAAGGLVLGLSVAAAAHA. His327 contacts Zn(2+). Glu328 is an active-site residue. His331 and His337 together coordinate Zn(2+).

The protein belongs to the peptidase M72 family. Zn(2+) serves as cofactor.

It catalyses the reaction Cleavage of Xaa-|-Asp, Xaa-|-Glu and Xaa-|-cysteic acid bonds.. Metalloprotease, specifically cleaves on the N-terminal side of aspartyl, glutamyl and cysteic acid residues. The chain is Peptidyl-Asp metalloendopeptidase from Stenotrophomonas maltophilia (strain R551-3).